A 203-amino-acid chain; its full sequence is Protein-L-isoaspartate O-methyltransferase (203 aa).

The active site involves serine 50.

This sequence belongs to the methyltransferase superfamily. L-isoaspartyl/D-aspartyl protein methyltransferase family.

Its subcellular location is the cytoplasm. The enzyme catalyses [protein]-L-isoaspartate + S-adenosyl-L-methionine = [protein]-L-isoaspartate alpha-methyl ester + S-adenosyl-L-homocysteine. Its function is as follows. Catalyzes the methyl esterification of L-isoaspartyl residues in peptides and proteins that result from spontaneous decomposition of normal L-aspartyl and L-asparaginyl residues. It plays a role in the repair and/or degradation of damaged proteins. The protein is Protein-L-isoaspartate O-methyltransferase of Methanococcoides burtonii (strain DSM 6242 / NBRC 107633 / OCM 468 / ACE-M).